Reading from the N-terminus, the 319-residue chain is Epoxyqueuosine reductase (319 aa).

The active-site Proton donor is the Asp128. The 4Fe-4S ferredoxin-type domain maps to 173 to 202 (EANDPHPNYCGTCTRCLSACPTAALVEPAV). The [4Fe-4S] cluster site is built by Cys182, Cys185, Cys188, Cys192, Cys208, Cys236, Cys239, and Cys243.

It belongs to the QueG family. As to quaternary structure, monomer. Cob(II)alamin serves as cofactor. It depends on [4Fe-4S] cluster as a cofactor.

It is found in the cytoplasm. It carries out the reaction epoxyqueuosine(34) in tRNA + AH2 = queuosine(34) in tRNA + A + H2O. It participates in tRNA modification; tRNA-queuosine biosynthesis. In terms of biological role, catalyzes the conversion of epoxyqueuosine (oQ) to queuosine (Q), which is a hypermodified base found in the wobble positions of tRNA(Asp), tRNA(Asn), tRNA(His) and tRNA(Tyr). This Gloeobacter violaceus (strain ATCC 29082 / PCC 7421) protein is Epoxyqueuosine reductase.